Reading from the N-terminus, the 231-residue chain is Histidine biosynthesis bifunctional protein HisIE (231 aa).

The segment at 1–130 (MQDVFRQIDW…QKYPIGVYHI (130 aa)) is phosphoribosyl-AMP cyclohydrolase. Residues 131-231 (LDDLYHIIEQ…GIEEKASRKH (101 aa)) are phosphoribosyl-ATP pyrophosphohydrolase.

It in the N-terminal section; belongs to the PRA-CH family. In the C-terminal section; belongs to the PRA-PH family.

Its subcellular location is the cytoplasm. It carries out the reaction 1-(5-phospho-beta-D-ribosyl)-ATP + H2O = 1-(5-phospho-beta-D-ribosyl)-5'-AMP + diphosphate + H(+). The enzyme catalyses 1-(5-phospho-beta-D-ribosyl)-5'-AMP + H2O = 1-(5-phospho-beta-D-ribosyl)-5-[(5-phospho-beta-D-ribosylamino)methylideneamino]imidazole-4-carboxamide. The protein operates within amino-acid biosynthesis; L-histidine biosynthesis; L-histidine from 5-phospho-alpha-D-ribose 1-diphosphate: step 2/9. It participates in amino-acid biosynthesis; L-histidine biosynthesis; L-histidine from 5-phospho-alpha-D-ribose 1-diphosphate: step 3/9. In Helicobacter hepaticus (strain ATCC 51449 / 3B1), this protein is Histidine biosynthesis bifunctional protein HisIE.